The following is a 356-amino-acid chain: Phospho-N-acetylmuramoyl-pentapeptide-transferase (356 aa).

A run of 10 helical transmembrane segments spans residues 25-45 (TIAAMLTSGLIVFLFGPSIIA), 70-90 (GTPTMGGLMILTGIVVSAFLW), 93-113 (LSNIYFWVSLLVMLSFGAIGF), 138-158 (FFVAAIAAFIILQIGSSGFAL), 164-184 (YLIHLGWFFIPFSAFVIVATG), 195-215 (GLAIVPVMVAALSFALIAYLC), 235-255 (LAVLLGAVVGAGLGFLWFNAP), 258-278 (AIFMGDTGSLALGGLLGTVAV), 284-304 (IVLVLIGGLFVVEAFSVVIQV), and 333-353 (QVVIRFWIISIVLALIGLSTL).

The protein belongs to the glycosyltransferase 4 family. MraY subfamily. The cofactor is Mg(2+).

The protein resides in the cell inner membrane. It carries out the reaction UDP-N-acetyl-alpha-D-muramoyl-L-alanyl-gamma-D-glutamyl-meso-2,6-diaminopimeloyl-D-alanyl-D-alanine + di-trans,octa-cis-undecaprenyl phosphate = di-trans,octa-cis-undecaprenyl diphospho-N-acetyl-alpha-D-muramoyl-L-alanyl-D-glutamyl-meso-2,6-diaminopimeloyl-D-alanyl-D-alanine + UMP. The protein operates within cell wall biogenesis; peptidoglycan biosynthesis. Functionally, catalyzes the initial step of the lipid cycle reactions in the biosynthesis of the cell wall peptidoglycan: transfers peptidoglycan precursor phospho-MurNAc-pentapeptide from UDP-MurNAc-pentapeptide onto the lipid carrier undecaprenyl phosphate, yielding undecaprenyl-pyrophosphoryl-MurNAc-pentapeptide, known as lipid I. The sequence is that of Phospho-N-acetylmuramoyl-pentapeptide-transferase from Bartonella tribocorum (strain CIP 105476 / IBS 506).